The following is a 218-amino-acid chain: N-(5'-phosphoribosyl)anthranilate isomerase (218 aa).

It belongs to the TrpF family.

It carries out the reaction N-(5-phospho-beta-D-ribosyl)anthranilate = 1-(2-carboxyphenylamino)-1-deoxy-D-ribulose 5-phosphate. It participates in amino-acid biosynthesis; L-tryptophan biosynthesis; L-tryptophan from chorismate: step 3/5. The sequence is that of N-(5'-phosphoribosyl)anthranilate isomerase from Desulfatibacillum aliphaticivorans.